Reading from the N-terminus, the 242-residue chain is UPF0246 protein SP_1547 (242 aa).

The protein belongs to the UPF0246 family.

In Streptococcus pneumoniae serotype 4 (strain ATCC BAA-334 / TIGR4), this protein is UPF0246 protein SP_1547.